The sequence spans 113 residues: Large ribosomal subunit protein eL31A (113 aa).

The protein belongs to the eukaryotic ribosomal protein eL31 family. As to quaternary structure, component of the large ribosomal subunit (LSU). Mature yeast ribosomes consist of a small (40S) and a large (60S) subunit. The 40S small subunit contains 1 molecule of ribosomal RNA (18S rRNA) and 33 different proteins (encoded by 57 genes). The large 60S subunit contains 3 rRNA molecules (25S, 5.8S and 5S rRNA) and 46 different proteins (encoded by 81 genes).

It is found in the cytoplasm. In terms of biological role, component of the ribosome, a large ribonucleoprotein complex responsible for the synthesis of proteins in the cell. The small ribosomal subunit (SSU) binds messenger RNAs (mRNAs) and translates the encoded message by selecting cognate aminoacyl-transfer RNA (tRNA) molecules. The large subunit (LSU) contains the ribosomal catalytic site termed the peptidyl transferase center (PTC), which catalyzes the formation of peptide bonds, thereby polymerizing the amino acids delivered by tRNAs into a polypeptide chain. The nascent polypeptides leave the ribosome through a tunnel in the LSU and interact with protein factors that function in enzymatic processing, targeting, and the membrane insertion of nascent chains at the exit of the ribosomal tunnel. This is Large ribosomal subunit protein eL31A from Saccharomyces cerevisiae (strain ATCC 204508 / S288c) (Baker's yeast).